A 512-amino-acid polypeptide reads, in one-letter code: Cytochrome P450 1A1 (512 aa).

The interval 29–40 (SRPQVPKGLKNP) is mitochondrial targeting signal. Ser-67 carries an O-linked (GlcNAc) serine glycan. Phe-224 is a binding site for substrate. Residue Cys-457 coordinates heme.

It belongs to the cytochrome P450 family. Interacts with cytosolic chaperones HSP70 and HSP90; this interaction is required for initial targeting to mitochondria. Interacts (via mitochondrial targeting signal) with TOMM40 (via N-terminus); this interaction is required for translocation across the mitochondrial outer membrane. It depends on heme as a cofactor. As to expression, lung, lymphocytes and placenta.

The protein localises to the endoplasmic reticulum membrane. It localises to the mitochondrion inner membrane. It is found in the microsome membrane. Its subcellular location is the cytoplasm. It carries out the reaction an organic molecule + reduced [NADPH--hemoprotein reductase] + O2 = an alcohol + oxidized [NADPH--hemoprotein reductase] + H2O + H(+). It catalyses the reaction estrone + reduced [NADPH--hemoprotein reductase] + O2 = 2-hydroxyestrone + oxidized [NADPH--hemoprotein reductase] + H2O + H(+). The catalysed reaction is estrone + reduced [NADPH--hemoprotein reductase] + O2 = 4-hydroxyestrone + oxidized [NADPH--hemoprotein reductase] + H2O + H(+). The enzyme catalyses estrone + reduced [NADPH--hemoprotein reductase] + O2 = 6alpha-hydroxyestrone + oxidized [NADPH--hemoprotein reductase] + H2O + H(+). It carries out the reaction estrone + reduced [NADPH--hemoprotein reductase] + O2 = 15alpha-hydroxyestrone + oxidized [NADPH--hemoprotein reductase] + H2O + H(+). It catalyses the reaction estrone + reduced [NADPH--hemoprotein reductase] + O2 = 16alpha-hydroxyestrone + oxidized [NADPH--hemoprotein reductase] + H2O + H(+). The catalysed reaction is 17beta-estradiol + reduced [NADPH--hemoprotein reductase] + O2 = 2-hydroxy-17beta-estradiol + oxidized [NADPH--hemoprotein reductase] + H2O + H(+). The enzyme catalyses 17beta-estradiol + reduced [NADPH--hemoprotein reductase] + O2 = 4-hydroxy-17beta-estradiol + oxidized [NADPH--hemoprotein reductase] + H2O + H(+). It carries out the reaction 17beta-estradiol + reduced [NADPH--hemoprotein reductase] + O2 = 6alpha-hydroxy-17beta-estradiol + oxidized [NADPH--hemoprotein reductase] + H2O + H(+). It catalyses the reaction 17beta-estradiol + reduced [NADPH--hemoprotein reductase] + O2 = 7alpha-hydroxy-17beta-estradiol + oxidized [NADPH--hemoprotein reductase] + H2O + H(+). The catalysed reaction is 17beta-estradiol + reduced [NADPH--hemoprotein reductase] + O2 = 15alpha-hydroxy-17beta-estradiol + oxidized [NADPH--hemoprotein reductase] + H2O + H(+). The enzyme catalyses (5Z,8Z,11Z)-eicosatrienoate + reduced [NADPH--hemoprotein reductase] + O2 = 19-hydroxy-(5Z,8Z,11Z)-eicosatrienoate + oxidized [NADPH--hemoprotein reductase] + H2O + H(+). It carries out the reaction (5Z,8Z,11Z,14Z)-eicosatetraenoate + reduced [NADPH--hemoprotein reductase] + O2 = 16-hydroxy-(5Z,8Z,11Z,14Z)-eicosatetraenoate + oxidized [NADPH--hemoprotein reductase] + H2O + H(+). It catalyses the reaction (5Z,8Z,11Z,14Z)-eicosatetraenoate + reduced [NADPH--hemoprotein reductase] + O2 = 17-hydroxy-(5Z,8Z,11Z,14Z)-eicosatetraenoate + oxidized [NADPH--hemoprotein reductase] + H2O + H(+). The catalysed reaction is (5Z,8Z,11Z,14Z)-eicosatetraenoate + reduced [NADPH--hemoprotein reductase] + O2 = 18-hydroxy-(5Z,8Z,11Z,14Z)-eicosatetraenoate + oxidized [NADPH--hemoprotein reductase] + H2O + H(+). The enzyme catalyses (5Z,8Z,11Z,14Z)-eicosatetraenoate + reduced [NADPH--hemoprotein reductase] + O2 = 19-hydroxy-(5Z,8Z,11Z,14Z)-eicosatetraenoate + oxidized [NADPH--hemoprotein reductase] + H2O + H(+). It carries out the reaction (5Z,8Z,11Z,14Z,17Z)-eicosapentaenoate + reduced [NADPH--hemoprotein reductase] + O2 = 19-hydroxy-(5Z,8Z,11Z,14Z,17Z)-eicosapentaenoate + oxidized [NADPH--hemoprotein reductase] + H2O + H(+). It catalyses the reaction (5Z,8Z,11Z,14Z)-eicosatetraenoate + reduced [NADPH--hemoprotein reductase] + O2 = (8R,9S)-epoxy-(5Z,11Z,14Z)-eicosatrienoate + oxidized [NADPH--hemoprotein reductase] + H2O + H(+). The catalysed reaction is (5Z,8Z,11Z,14Z)-eicosatetraenoate + reduced [NADPH--hemoprotein reductase] + O2 = (11R,12S)-epoxy-(5Z,8Z,14Z)-eicosatrienoate + oxidized [NADPH--hemoprotein reductase] + H2O + H(+). The enzyme catalyses (5Z,8Z,11Z,14Z)-eicosatetraenoate + reduced [NADPH--hemoprotein reductase] + O2 = (14S,15R)-epoxy-(5Z,8Z,11Z)-eicosatrienoate + oxidized [NADPH--hemoprotein reductase] + H2O + H(+). It carries out the reaction (5Z,8Z,11Z,14Z)-eicosatetraenoate + reduced [NADPH--hemoprotein reductase] + O2 = (14R,15S)-epoxy-(5Z,8Z,11Z)-eicosatrienoate + oxidized [NADPH--hemoprotein reductase] + H2O + H(+). It catalyses the reaction (5Z,8Z,11Z,14Z,17Z)-eicosapentaenoate + reduced [NADPH--hemoprotein reductase] + O2 = (17R,18S)-epoxy-(5Z,8Z,11Z,14Z)-eicosatetraenoate + oxidized [NADPH--hemoprotein reductase] + H2O + H(+). The catalysed reaction is (4Z,7Z,10Z,13Z,16Z,19Z)-docosahexaenoate + reduced [NADPH--hemoprotein reductase] + O2 = (19S,20R)-epoxy-(4Z,7Z,10Z,13Z,16Z)-docosapentaenoate + oxidized [NADPH--hemoprotein reductase] + H2O + H(+). The enzyme catalyses (4Z,7Z,10Z,13Z,16Z,19Z)-docosahexaenoate + reduced [NADPH--hemoprotein reductase] + O2 = (19R,20S)-epoxy-(4Z,7Z,10Z,13Z,16Z)-docosapentaenoate + oxidized [NADPH--hemoprotein reductase] + H2O + H(+). It carries out the reaction all-trans-retinol + reduced [NADPH--hemoprotein reductase] + O2 = all-trans-retinal + oxidized [NADPH--hemoprotein reductase] + 2 H2O + H(+). It catalyses the reaction all-trans-retinal + reduced [NADPH--hemoprotein reductase] + O2 = all-trans-retinoate + oxidized [NADPH--hemoprotein reductase] + H2O + 2 H(+). The catalysed reaction is (13S)-hydroperoxy-(9Z,11E)-octadecadienoate = 13-oxo-(9Z,11E)-octadecadienoate + H2O. The enzyme catalyses (12S)-hydroperoxy-(5Z,8Z,10E,14Z)-eicosatetraenoate = 12-oxo-(5Z,8Z,10E,14Z)-eicosatetraenoate + H2O. It carries out the reaction (15S)-hydroperoxy-(5Z,8Z,11Z,13E)-eicosatetraenoate = 15-oxo-(5Z,8Z,11Z,13E)-eicosatetraenoate + H2O. It catalyses the reaction (5S)-hydroperoxy-(6E,8Z,11Z,14Z)-eicosatetraenoate = 5-oxo-(6E,8Z,11Z,14Z)-eicosatetraenoate + H2O. Its pathway is steroid hormone biosynthesis. It participates in lipid metabolism; fatty acid metabolism. The protein operates within cofactor metabolism; retinol metabolism. In terms of biological role, a cytochrome P450 monooxygenase involved in the metabolism of various endogenous substrates, including fatty acids, steroid hormones and vitamins. Mechanistically, uses molecular oxygen inserting one oxygen atom into a substrate, and reducing the second into a water molecule, with two electrons provided by NADPH via cytochrome P450 reductase (NADPH--hemoprotein reductase). Catalyzes the hydroxylation of carbon-hydrogen bonds. Exhibits high catalytic activity for the formation of hydroxyestrogens from estrone (E1) and 17beta-estradiol (E2), namely 2-hydroxy E1 and E2, as well as D-ring hydroxylated E1 and E2 at the C15-alpha and C16-alpha positions. Displays different regioselectivities for polyunsaturated fatty acids (PUFA) hydroxylation. Catalyzes the epoxidation of double bonds of certain PUFA. Converts arachidonic acid toward epoxyeicosatrienoic acid (EET) regioisomers, 8,9-, 11,12-, and 14,15-EET, that function as lipid mediators in the vascular system. Displays an absolute stereoselectivity in the epoxidation of eicosapentaenoic acid (EPA) producing the 17(R),18(S) enantiomer. May play an important role in all-trans retinoic acid biosynthesis in extrahepatic tissues. Catalyzes two successive oxidative transformation of all-trans retinol to all-trans retinal and then to the active form all-trans retinoic acid. May also participate in eicosanoids metabolism by converting hydroperoxide species into oxo metabolites (lipoxygenase-like reaction, NADPH-independent). The polypeptide is Cytochrome P450 1A1 (Homo sapiens (Human)).